Reading from the N-terminus, the 419-residue chain is UDP-N-acetylglucosamine 1-carboxyvinyltransferase (419 aa).

Position 22-23 (22-23) interacts with phosphoenolpyruvate; the sequence is KN. Position 93 (arginine 93) interacts with UDP-N-acetyl-alpha-D-glucosamine. The Proton donor role is filled by cysteine 117. 2-(S-cysteinyl)pyruvic acid O-phosphothioketal is present on cysteine 117. Positions 306 and 328 each coordinate UDP-N-acetyl-alpha-D-glucosamine.

It belongs to the EPSP synthase family. MurA subfamily.

It is found in the cytoplasm. It catalyses the reaction phosphoenolpyruvate + UDP-N-acetyl-alpha-D-glucosamine = UDP-N-acetyl-3-O-(1-carboxyvinyl)-alpha-D-glucosamine + phosphate. Its pathway is cell wall biogenesis; peptidoglycan biosynthesis. Cell wall formation. Adds enolpyruvyl to UDP-N-acetylglucosamine. In Magnetococcus marinus (strain ATCC BAA-1437 / JCM 17883 / MC-1), this protein is UDP-N-acetylglucosamine 1-carboxyvinyltransferase.